A 338-amino-acid chain; its full sequence is Ketol-acid reductoisomerase (NADP(+)) (338 aa).

The KARI N-terminal Rossmann domain maps to 1–181; that stretch reads MKVYYDKDAD…GGTKGGVIET (181 aa). NADP(+)-binding positions include 24 to 27, Arg-47, and Ser-52; that span reads YGSQ. The active site involves His-107. Residue Gly-133 coordinates NADP(+). One can recognise a KARI C-terminal knotted domain in the interval 182-327; sequence NFKEETETDL…GQLRDMMPWI (146 aa). Mg(2+)-binding residues include Asp-190, Glu-194, Glu-226, and Glu-230. Ser-251 contacts substrate.

This sequence belongs to the ketol-acid reductoisomerase family. The cofactor is Mg(2+).

It carries out the reaction (2R)-2,3-dihydroxy-3-methylbutanoate + NADP(+) = (2S)-2-acetolactate + NADPH + H(+). The enzyme catalyses (2R,3R)-2,3-dihydroxy-3-methylpentanoate + NADP(+) = (S)-2-ethyl-2-hydroxy-3-oxobutanoate + NADPH + H(+). It functions in the pathway amino-acid biosynthesis; L-isoleucine biosynthesis; L-isoleucine from 2-oxobutanoate: step 2/4. It participates in amino-acid biosynthesis; L-valine biosynthesis; L-valine from pyruvate: step 2/4. Functionally, involved in the biosynthesis of branched-chain amino acids (BCAA). Catalyzes an alkyl-migration followed by a ketol-acid reduction of (S)-2-acetolactate (S2AL) to yield (R)-2,3-dihydroxy-isovalerate. In the isomerase reaction, S2AL is rearranged via a Mg-dependent methyl migration to produce 3-hydroxy-3-methyl-2-ketobutyrate (HMKB). In the reductase reaction, this 2-ketoacid undergoes a metal-dependent reduction by NADPH to yield (R)-2,3-dihydroxy-isovalerate. In Azoarcus sp. (strain BH72), this protein is Ketol-acid reductoisomerase (NADP(+)).